The chain runs to 330 residues: Lipoyl synthase (330 aa).

The [4Fe-4S] cluster site is built by Cys-77, Cys-82, Cys-88, Cys-103, Cys-107, Cys-110, and Ser-317. Residues 89-306 (FNHGTATFMI…RSEAEKMGFE (218 aa)) form the Radical SAM core domain.

It belongs to the radical SAM superfamily. Lipoyl synthase family. [4Fe-4S] cluster serves as cofactor.

The protein localises to the cytoplasm. The enzyme catalyses [[Fe-S] cluster scaffold protein carrying a second [4Fe-4S](2+) cluster] + N(6)-octanoyl-L-lysyl-[protein] + 2 oxidized [2Fe-2S]-[ferredoxin] + 2 S-adenosyl-L-methionine + 4 H(+) = [[Fe-S] cluster scaffold protein] + N(6)-[(R)-dihydrolipoyl]-L-lysyl-[protein] + 4 Fe(3+) + 2 hydrogen sulfide + 2 5'-deoxyadenosine + 2 L-methionine + 2 reduced [2Fe-2S]-[ferredoxin]. It functions in the pathway protein modification; protein lipoylation via endogenous pathway; protein N(6)-(lipoyl)lysine from octanoyl-[acyl-carrier-protein]: step 2/2. Its function is as follows. Catalyzes the radical-mediated insertion of two sulfur atoms into the C-6 and C-8 positions of the octanoyl moiety bound to the lipoyl domains of lipoate-dependent enzymes, thereby converting the octanoylated domains into lipoylated derivatives. This is Lipoyl synthase from Haemophilus ducreyi (strain 35000HP / ATCC 700724).